Reading from the N-terminus, the 268-residue chain is Malonyl-[acyl-carrier protein] O-methyltransferase 1 (268 aa).

It belongs to the methyltransferase superfamily.

It carries out the reaction malonyl-[ACP] + S-adenosyl-L-methionine = malonyl-[ACP] methyl ester + S-adenosyl-L-homocysteine. The protein operates within cofactor biosynthesis; biotin biosynthesis. Converts the free carboxyl group of a malonyl-thioester to its methyl ester by transfer of a methyl group from S-adenosyl-L-methionine (SAM). It allows to synthesize pimeloyl-ACP via the fatty acid synthetic pathway. This Ilyobacter polytropus (strain ATCC 51220 / DSM 2926 / LMG 16218 / CuHBu1) protein is Malonyl-[acyl-carrier protein] O-methyltransferase 1.